A 210-amino-acid chain; its full sequence is Large ribosomal subunit protein uL3 (210 aa).

Positions 133–152 (ATHGNSLSHRVHGSTGQNQT) are disordered. Gln151 carries the post-translational modification N5-methylglutamine.

Belongs to the universal ribosomal protein uL3 family. As to quaternary structure, part of the 50S ribosomal subunit. Forms a cluster with proteins L14 and L19. In terms of processing, methylated by PrmB.

Its function is as follows. One of the primary rRNA binding proteins, it binds directly near the 3'-end of the 23S rRNA, where it nucleates assembly of the 50S subunit. The protein is Large ribosomal subunit protein uL3 of Francisella tularensis subsp. holarctica (strain FTNF002-00 / FTA).